Reading from the N-terminus, the 67-residue chain is Myrmicitoxin(1)-Pm6a (67 aa).

A signal peptide spans 1–25; sequence MRSLYLSFSLTIIFVLVIMHAEAKA. The propeptide occupies 26–37; the sequence is ISEPNAIAEADP. V66 is modified (valine amide).

It belongs to the formicidae venom clade 3 family. As to expression, expressed by the venom gland.

It is found in the secreted. In terms of biological role, toxin that causes a rapid and irreversible paralysis when intrathoracically injected into insects (blowflies). Does not cause spontaneous nocifensive behaviors by intraplantar injection in mice. Exhibits hemolytic and cytotoxic activities on HEK293 cells. In Pogonomyrmex maricopa (Maricopa harvester ant), this protein is Myrmicitoxin(1)-Pm6a.